The primary structure comprises 163 residues: MSEKIAVVPGSFDPVTFGHLDIIKRAADVFDIVYVAVLNNSAKNPLFSVEERMALMAEVTKALPNVRIESSSGLLIDYAKEKKAKAIVRGLRAVSDFEYEMQITSMNRFLDETIETFFIMTKNQYSFLSSSIVKEVAKYGSDVNELVPDCVVQALKEKYGFSQ.

S11 is a substrate binding site. ATP contacts are provided by residues 11-12 and H19; that span reads SF. Substrate contacts are provided by K43, L75, and R89. ATP-binding positions include 90 to 92, E100, and 125 to 131; these read GLR and YSFLSSS.

The protein belongs to the bacterial CoaD family. In terms of assembly, homohexamer. It depends on Mg(2+) as a cofactor.

It is found in the cytoplasm. The catalysed reaction is (R)-4'-phosphopantetheine + ATP + H(+) = 3'-dephospho-CoA + diphosphate. Its pathway is cofactor biosynthesis; coenzyme A biosynthesis; CoA from (R)-pantothenate: step 4/5. Functionally, reversibly transfers an adenylyl group from ATP to 4'-phosphopantetheine, yielding dephospho-CoA (dPCoA) and pyrophosphate. The chain is Phosphopantetheine adenylyltransferase from Lysinibacillus sphaericus (strain C3-41).